Reading from the N-terminus, the 98-residue chain is NADH-ubiquinone oxidoreductase chain 4L (98 aa).

A run of 3 helical transmembrane segments spans residues 1–21 (MTAI…GVLV), 29–49 (TLLC…LLIT), and 59–79 (LPLT…ALLV).

It belongs to the complex I subunit 4L family. As to quaternary structure, core subunit of respiratory chain NADH dehydrogenase (Complex I) which is composed of 45 different subunits.

It localises to the mitochondrion inner membrane. The catalysed reaction is a ubiquinone + NADH + 5 H(+)(in) = a ubiquinol + NAD(+) + 4 H(+)(out). Functionally, core subunit of the mitochondrial membrane respiratory chain NADH dehydrogenase (Complex I) which catalyzes electron transfer from NADH through the respiratory chain, using ubiquinone as an electron acceptor. Part of the enzyme membrane arm which is embedded in the lipid bilayer and involved in proton translocation. This is NADH-ubiquinone oxidoreductase chain 4L (MT-ND4L) from Notoryctes typhlops (Southern marsupial mole).